The sequence spans 41 residues: Large ribosomal subunit protein bL36B (41 aa).

The protein belongs to the bacterial ribosomal protein bL36 family.

The protein is Large ribosomal subunit protein bL36B of Neisseria meningitidis serogroup C (strain 053442).